Reading from the N-terminus, the 344-residue chain is Anthranilate phosphoribosyltransferase (344 aa).

5-phospho-alpha-D-ribose 1-diphosphate is bound by residues Gly86, 89-90 (GD), Thr94, 96-99 (NIST), 114-122 (KHGNKSASG), and Ser126. Residue Gly86 participates in anthranilate binding. A Mg(2+)-binding site is contributed by Ser98. Asn117 contributes to the anthranilate binding site. Anthranilate is bound at residue Arg172. Mg(2+) is bound by residues Asp231 and Glu232.

This sequence belongs to the anthranilate phosphoribosyltransferase family. Homodimer. Mg(2+) serves as cofactor.

The enzyme catalyses N-(5-phospho-beta-D-ribosyl)anthranilate + diphosphate = 5-phospho-alpha-D-ribose 1-diphosphate + anthranilate. It participates in amino-acid biosynthesis; L-tryptophan biosynthesis; L-tryptophan from chorismate: step 2/5. Functionally, catalyzes the transfer of the phosphoribosyl group of 5-phosphorylribose-1-pyrophosphate (PRPP) to anthranilate to yield N-(5'-phosphoribosyl)-anthranilate (PRA). This is Anthranilate phosphoribosyltransferase from Prochlorococcus marinus (strain AS9601).